The chain runs to 562 residues: Beta-hexosaminidase (562 aa).

An N-terminal signal peptide occupies residues 1–22; the sequence is MVLDKMIIFHLLLWLCNVVVHA. Residues Asn38, Asn52, Asn111, Asn337, Asn382, Asn396, and Asn463 are each glycosylated (N-linked (GlcNAc...) asparagine).

It belongs to the glycosyl hydrolase 20 family.

The catalysed reaction is Hydrolysis of terminal non-reducing N-acetyl-D-hexosamine residues in N-acetyl-beta-D-hexosaminides.. Its function is as follows. Has a broad substrate specificity. This is Beta-hexosaminidase (HEX1) from Candida albicans (Yeast).